Reading from the N-terminus, the 231-residue chain is Probable septum site-determining protein MinC (231 aa).

The tract at residues E100–T125 is disordered.

The protein belongs to the MinC family. As to quaternary structure, interacts with MinD and FtsZ.

Cell division inhibitor that blocks the formation of polar Z ring septums. Rapidly oscillates between the poles of the cell to destabilize FtsZ filaments that have formed before they mature into polar Z rings. Prevents FtsZ polymerization. This is Probable septum site-determining protein MinC from Escherichia coli O81 (strain ED1a).